Consider the following 334-residue polypeptide: Protein-glutamate methylesterase/protein-glutamine glutaminase 1 (334 aa).

The region spanning 2–120 (NIGIVNDLPL…GAAGDTTKLL (119 aa)) is the Response regulatory domain. A 4-aspartylphosphate modification is found at Asp53. Residues 145 to 334 (RAGGGPLIAI…AGELAALARI (190 aa)) enclose the CheB-type methylesterase domain. Catalysis depends on residues Ser157, His184, and Asp277.

This sequence belongs to the CheB family. In terms of processing, phosphorylated by CheA. Phosphorylation of the N-terminal regulatory domain activates the methylesterase activity.

It is found in the cytoplasm. It carries out the reaction [protein]-L-glutamate 5-O-methyl ester + H2O = L-glutamyl-[protein] + methanol + H(+). It catalyses the reaction L-glutaminyl-[protein] + H2O = L-glutamyl-[protein] + NH4(+). Its function is as follows. Involved in chemotaxis. Part of a chemotaxis signal transduction system that modulates chemotaxis in response to various stimuli. Catalyzes the demethylation of specific methylglutamate residues introduced into the chemoreceptors (methyl-accepting chemotaxis proteins or MCP) by CheR. Also mediates the irreversible deamidation of specific glutamine residues to glutamic acid. The sequence is that of Protein-glutamate methylesterase/protein-glutamine glutaminase 1 from Burkholderia lata (strain ATCC 17760 / DSM 23089 / LMG 22485 / NCIMB 9086 / R18194 / 383).